Reading from the N-terminus, the 268-residue chain is Nickel import ATP-binding protein NikE (268 aa).

The 249-residue stretch at 4 to 252 folds into the ABC transporter domain; that stretch reads LNVSGLSHHY…SSDAGRVLQN (249 aa). 45–52 is a binding site for ATP; the sequence is GRSGCGKS.

Belongs to the ABC transporter superfamily. Nickel importer (TC 3.A.1.5.3) family. In terms of assembly, the complex is composed of two ATP-binding proteins (NikD and NikE), two transmembrane proteins (NikB and NikC) and a solute-binding protein (NikA).

Its subcellular location is the cell inner membrane. The enzyme catalyses Ni(2+)(out) + ATP + H2O = Ni(2+)(in) + ADP + phosphate + H(+). Part of the ABC transporter complex NikABCDE involved in nickel import. Responsible for energy coupling to the transport system. The chain is Nickel import ATP-binding protein NikE from Shigella sonnei (strain Ss046).